The following is a 942-amino-acid chain: UvrABC system protein A (942 aa).

Residue 31–38 (GLSGSGKS) participates in ATP binding. The C4-type zinc finger occupies 253 to 280 (CSECGYSLPELEPRLFSFNNPAGACPTC). ABC transporter domains follow at residues 310–586 (WDRR…EASI) and 606–936 (YDAN…RFLT). 639–646 (GVSGSGKS) is an ATP binding site. Residues 739-765 (CEACQGDGVIKVEMHFLPDVYVPCDHC) form a C4-type zinc finger.

It belongs to the ABC transporter superfamily. UvrA family. In terms of assembly, forms a heterotetramer with UvrB during the search for lesions.

Its subcellular location is the cytoplasm. Its function is as follows. The UvrABC repair system catalyzes the recognition and processing of DNA lesions. UvrA is an ATPase and a DNA-binding protein. A damage recognition complex composed of 2 UvrA and 2 UvrB subunits scans DNA for abnormalities. When the presence of a lesion has been verified by UvrB, the UvrA molecules dissociate. The protein is UvrABC system protein A of Haemophilus ducreyi (strain 35000HP / ATCC 700724).